The primary structure comprises 425 residues: Histone-binding protein RBBP7 (425 aa).

A2 carries the N-acetylalanine modification. Position 3 is a phosphoserine (S3). Residue K4 is modified to N6-acetyllysine; alternate. A Glycyl lysine isopeptide (Lys-Gly) (interchain with G-Cter in SUMO2); alternate cross-link involves residue K4. K4 is covalently cross-linked (Glycyl lysine isopeptide (Lys-Gly) (interchain with G-Cter in ubiquitin); alternate). T10 is modified (phosphothreonine). 7 WD repeats span residues Q47–H122, R128–R173, G181–D217, V228–D269, V275–F312, E318–H369, and I376–M403. Position 95 is a phosphoserine (S95). K101 participates in a covalent cross-link: Glycyl lysine isopeptide (Lys-Gly) (interchain with G-Cter in SUMO2). Position 119 is an N6-acetyllysine (K119). Residue K155 forms a Glycyl lysine isopeptide (Lys-Gly) (interchain with G-Cter in SUMO2) linkage. K159 is modified (N6-acetyllysine; alternate). A Glycyl lysine isopeptide (Lys-Gly) (interchain with G-Cter in SUMO2); alternate cross-link involves residue K159. S354 bears the Phosphoserine mark.

The protein belongs to the WD repeat RBAP46/RBAP48/MSI1 family. In terms of assembly, binds directly to helix 1 of the histone fold of histone H4, a region that is not accessible when H4 is in chromatin. Subunit of the type B histone acetyltransferase (HAT) complex, composed of RBBP7 and HAT1. Subunit of the core histone deacetylase (HDAC) complex, which is composed of HDAC1, HDAC2, RBBP4 and RBBP7. The core HDAC complex associates with SIN3A, ARID4B/SAP180, SAP18, SAP30, SAP130, SUDS3/SAP45 and possibly ARID4A/RBP1 and ING1 to form the SIN3 HDAC complex. Component of the nucleosome remodeling and deacetylase (NuRD) repressor complex, composed of core proteins MTA1, MTA2, MTA3, RBBP4, RBBP7, HDAC1, HDAC2, MBD2, MBD3, and peripherally associated proteins CDK2AP1, CDK2AP2, GATAD2A, GATAD2B, CHD3, CHD4 and CHD5. The exact stoichiometry of the NuRD complex is unknown, and some subunits such as MBD2 and MBD3, GATAD2A and GATAD2B, and CHD3, CHD4 and CHD5 define mutually exclusive NuRD complexes. The NuRD complex may interact with MBD3L1. The NuRD complex may interact with MBD3L2. Subunit of the PRC2/EED-EZH2 complex, which is composed of at least EED, EZH2, RBBP4, RBBP7 and SUZ12. The PRC2/EED-EZH2 complex may also associate with HDAC1. Component of the NURF-1 ISWI chromatin remodeling complex (also called the nucleosome-remodeling factor (NURF) complex) at least composed of SMARCA1, BPTF, RBBP4 and RBBP7. Within the complex interacts with SMARCA1. Component of the BPFT-SMARCA1 complex at least composed of SMARCA1, BPFT, RBBP4 and RBBP7; the complex is catalytically inactive and does not remodel chromatin. Within the complex interacts with SMARCA1. Interacts with BRCA1. Interacts with CDK2AP1. Interacts with CENPA. Interacts with CHD3. Interacts with CHD4. Interacts with CREBBP, and this interaction may be enhanced by the binding of phosphorylated CREB1 to CREBBP. Interacts with HDAC7. Interacts with MTA1. Interacts with PWWP2B. Interacts with RB1 (via viral protein-binding domain). Interacts with SUV39H1. Higher levels in brain, thymus, lung, spleen, kidney, testis, and ovary/uterus; lower levels in heart, liver, and muscle.

It localises to the nucleus. In terms of biological role, core histone-binding subunit that may target chromatin remodeling factors, histone acetyltransferases and histone deacetylases to their histone substrates in a manner that is regulated by nucleosomal DNA. Component of several complexes which regulate chromatin metabolism. These include the type B histone acetyltransferase (HAT) complex, which is required for chromatin assembly following DNA replication; the core histone deacetylase (HDAC) complex, which promotes histone deacetylation and consequent transcriptional repression; the nucleosome remodeling and histone deacetylase complex (the NuRD complex), which promotes transcriptional repression by histone deacetylation and nucleosome remodeling; and the PRC2/EED-EZH2 complex, which promotes repression of homeotic genes during development; and the NURF (nucleosome remodeling factor) complex. This is Histone-binding protein RBBP7 (Rbbp7) from Mus musculus (Mouse).